A 285-amino-acid chain; its full sequence is Urease accessory protein UreD (285 aa).

It belongs to the UreD family. In terms of assembly, ureD, UreF and UreG form a complex that acts as a GTP-hydrolysis-dependent molecular chaperone, activating the urease apoprotein by helping to assemble the nickel containing metallocenter of UreC. The UreE protein probably delivers the nickel.

It localises to the cytoplasm. Its function is as follows. Required for maturation of urease via the functional incorporation of the urease nickel metallocenter. The polypeptide is Urease accessory protein UreD (Methylobacillus flagellatus (strain ATCC 51484 / DSM 6875 / VKM B-1610 / KT)).